We begin with the raw amino-acid sequence, 363 residues long: Pyrimidine monooxygenase RutA (363 aa).

Residues 49 to 50, Asn-115, Glu-124, 140 to 141, and Ser-190 contribute to the FMN site; these read IK and RY.

The protein belongs to the NtaA/SnaA/DszA monooxygenase family. RutA subfamily.

The enzyme catalyses uracil + FMNH2 + NADH + O2 = (Z)-3-ureidoacrylate + FMN + NAD(+) + H2O + H(+). The catalysed reaction is thymine + FMNH2 + NADH + O2 = (Z)-2-methylureidoacrylate + FMN + NAD(+) + H2O + H(+). Functionally, catalyzes the pyrimidine ring opening between N-3 and C-4 by an unusual flavin hydroperoxide-catalyzed mechanism, adding oxygen atoms in the process to yield ureidoacrylate peracid, that immediately reacts with FMN forming ureidoacrylate and FMN-N(5)-oxide. The FMN-N(5)-oxide reacts spontaneously with NADH to produce FMN. Requires the flavin reductase RutF to regenerate FMN in vivo. The polypeptide is Pyrimidine monooxygenase RutA (Enterobacter sp. (strain 638)).